The chain runs to 390 residues: DNA replication and repair protein RecF (390 aa).

30 to 37 (GDNAQGKS) lines the ATP pocket.

It belongs to the RecF family.

It is found in the cytoplasm. Functionally, the RecF protein is involved in DNA metabolism; it is required for DNA replication and normal SOS inducibility. RecF binds preferentially to single-stranded, linear DNA. It also seems to bind ATP. This Trichodesmium erythraeum (strain IMS101) protein is DNA replication and repair protein RecF.